A 307-amino-acid chain; its full sequence is Quinolinate synthase (307 aa).

Positions 20 and 37 each coordinate iminosuccinate. [4Fe-4S] cluster is bound at residue cysteine 82. Residues 108 to 110 (YIN) and serine 125 each bind iminosuccinate. Position 168 (cysteine 168) interacts with [4Fe-4S] cluster. Residues 194-196 (HPE) and threonine 219 contribute to the iminosuccinate site. Position 264 (cysteine 264) interacts with [4Fe-4S] cluster.

Belongs to the quinolinate synthase family. Type 2 subfamily. The cofactor is [4Fe-4S] cluster.

Its subcellular location is the cytoplasm. The enzyme catalyses iminosuccinate + dihydroxyacetone phosphate = quinolinate + phosphate + 2 H2O + H(+). It participates in cofactor biosynthesis; NAD(+) biosynthesis; quinolinate from iminoaspartate: step 1/1. Its function is as follows. Catalyzes the condensation of iminoaspartate with dihydroxyacetone phosphate to form quinolinate. In Pyrobaculum aerophilum (strain ATCC 51768 / DSM 7523 / JCM 9630 / CIP 104966 / NBRC 100827 / IM2), this protein is Quinolinate synthase.